Consider the following 234-residue polypeptide: Ubiquinone biosynthesis O-methyltransferase (234 aa).

R37, G56, D77, and M121 together coordinate S-adenosyl-L-methionine.

This sequence belongs to the methyltransferase superfamily. UbiG/COQ3 family.

It carries out the reaction a 3-demethylubiquinol + S-adenosyl-L-methionine = a ubiquinol + S-adenosyl-L-homocysteine + H(+). The catalysed reaction is a 3-(all-trans-polyprenyl)benzene-1,2-diol + S-adenosyl-L-methionine = a 2-methoxy-6-(all-trans-polyprenyl)phenol + S-adenosyl-L-homocysteine + H(+). It functions in the pathway cofactor biosynthesis; ubiquinone biosynthesis. O-methyltransferase that catalyzes the 2 O-methylation steps in the ubiquinone biosynthetic pathway. The polypeptide is Ubiquinone biosynthesis O-methyltransferase (Aromatoleum aromaticum (strain DSM 19018 / LMG 30748 / EbN1) (Azoarcus sp. (strain EbN1))).